Consider the following 750-residue polypeptide: Photosystem I P700 chlorophyll a apoprotein A1 (750 aa).

Transmembrane regions (helical) follow at residues 70–93 (VFSA…FHGA), 156–179 (LYCT…FHYH), 195–219 (LNHH…HVSL), 291–309 (IAHH…GHMY), 346–369 (WHAQ…HHMY), 385–411 (LSLF…IFMV), 433–455 (AIIS…LYIH), and 531–549 (FLVH…LILL). [4Fe-4S] cluster is bound by residues C573 and C582. Transmembrane regions (helical) follow at residues 589 to 610 (HVFL…HFSW) and 664 to 686 (LSAY…MFLF). H675 serves as a coordination point for chlorophyll a'. 2 residues coordinate chlorophyll a: M683 and Y691. W692 contacts phylloquinone. Residues 724-744 (AVGVTHYLLGGIATTWAFFLA) traverse the membrane as a helical segment.

Belongs to the PsaA/PsaB family. In terms of assembly, the PsaA/B heterodimer binds the P700 chlorophyll special pair and subsequent electron acceptors. PSI consists of a core antenna complex that captures photons, and an electron transfer chain that converts photonic excitation into a charge separation. The eukaryotic PSI reaction center is composed of at least 11 subunits. Requires P700 is a chlorophyll a/chlorophyll a' dimer, A0 is one or more chlorophyll a, A1 is one or both phylloquinones and FX is a shared 4Fe-4S iron-sulfur center. as cofactor.

The protein resides in the plastid. It localises to the chloroplast thylakoid membrane. The enzyme catalyses reduced [plastocyanin] + hnu + oxidized [2Fe-2S]-[ferredoxin] = oxidized [plastocyanin] + reduced [2Fe-2S]-[ferredoxin]. Functionally, psaA and PsaB bind P700, the primary electron donor of photosystem I (PSI), as well as the electron acceptors A0, A1 and FX. PSI is a plastocyanin-ferredoxin oxidoreductase, converting photonic excitation into a charge separation, which transfers an electron from the donor P700 chlorophyll pair to the spectroscopically characterized acceptors A0, A1, FX, FA and FB in turn. Oxidized P700 is reduced on the lumenal side of the thylakoid membrane by plastocyanin. This Draba nemorosa (Woodland whitlowgrass) protein is Photosystem I P700 chlorophyll a apoprotein A1.